Consider the following 780-residue polypeptide: Phosphoenolpyruvate synthase (780 aa).

H409 (tele-phosphohistidine intermediate) is an active-site residue. Substrate-binding residues include R499, R566, E668, G689, S690, N691, and D692. E668 is a Mg(2+) binding site. D692 contacts Mg(2+).

The protein belongs to the PEP-utilizing enzyme family. Requires Mg(2+) as cofactor.

The catalysed reaction is pyruvate + ATP + H2O = phosphoenolpyruvate + AMP + phosphate + 2 H(+). The protein operates within carbohydrate biosynthesis; gluconeogenesis. In terms of biological role, catalyzes the phosphorylation of pyruvate to phosphoenolpyruvate. This is Phosphoenolpyruvate synthase (ppsA) from Deinococcus radiodurans (strain ATCC 13939 / DSM 20539 / JCM 16871 / CCUG 27074 / LMG 4051 / NBRC 15346 / NCIMB 9279 / VKM B-1422 / R1).